Here is a 427-residue protein sequence, read N- to C-terminus: MQKNITKISDTEQELEIILSAEEFGTEYNQELEEAKRTVQIKGFRKGHVPAGMIKKLVGPAIEASIAEKMASKHFSAIADEENIKPASRAAIESFSFDDNQLSIKLSYEIHPEFELKGFEGYTFTQPRYTITDEDVQKEINLILKGHGTLISIDDAASATDTVIGDVVKLNAEGEAEEGSAMENHHFNLEYLPEENPFRSALTGKKAGEIADVTTEPKDEETPAQIYRITVKEVKRLELPELTDELVKEISGQRFEHAADFTSDVRLQLEQHFTMKSEDELLESISAKLIEENPVSAPKTMIASFANMLVENAKRQMGGNFPKGFDAGQFEQAMAPNAEKHARWLLISQKIAEINNLSVTDDDIRAFAEKEAEKNPTLSVEEAISTYMSTEFRDYITDSILKDKVYDIIKSQVTITEEPTPIPVRQN.

A PPIase FKBP-type domain is found at 160 to 240; sequence TDTVIGDVVK…VKEVKRLELP (81 aa).

The protein belongs to the FKBP-type PPIase family. Tig subfamily.

Its subcellular location is the cytoplasm. It catalyses the reaction [protein]-peptidylproline (omega=180) = [protein]-peptidylproline (omega=0). In terms of biological role, involved in protein export. Acts as a chaperone by maintaining the newly synthesized protein in an open conformation. Functions as a peptidyl-prolyl cis-trans isomerase. The sequence is that of Trigger factor from Chlorobium limicola (strain DSM 245 / NBRC 103803 / 6330).